Reading from the N-terminus, the 430-residue chain is Alpha-(1-&gt;3)-arabinofuranosyltransferase (430 aa).

10 helical membrane-spanning segments follow: residues 26 to 46 (APST…LSVI), 114 to 134 (WYIS…LRIF), 136 to 156 (YTLS…TESV), 160 to 180 (LVFT…FRWL), 194 to 214 (AIGL…LPVL), 218 to 238 (FYTL…AWPL), 276 to 296 (WLIL…LWLL), 307 to 327 (FWLL…LSLG), 352 to 372 (WPAW…LGHW), and 381 to 401 (YMKI…VLYF).

The protein belongs to the glycosyltransferase 87 family.

It localises to the cell membrane. It carries out the reaction Adds an alpha-D-arabinofuranosyl group from trans,octacis-decaprenylphospho-beta-D-arabinofuranose at the 3-O-position of an alpha-(1-&gt;5)-arabinofuranan chain attached to a beta-(1-&gt;5)-galactofuranan chain.. The protein operates within cell wall biogenesis; cell wall polysaccharide biosynthesis. Its function is as follows. Involved in the biosynthesis of the arabinogalactan (AG) region of the mycolylarabinogalactan-peptidoglycan (mAGP) complex, an essential component of the mycobacterial cell wall. Catalyzes the addition of an arabinofuranosyl (Araf) residue from the sugar donor beta-D-arabinofuranosyl-1-monophosphoryldecaprenol (DPA) on the C-3 of an alpha-(1-&gt;5)-linked Araf from the arabinan backbone of AG. The sequence is that of Alpha-(1-&gt;3)-arabinofuranosyltransferase (aftC) from Mycolicibacterium smegmatis (strain ATCC 700084 / mc(2)155) (Mycobacterium smegmatis).